Consider the following 74-residue polypeptide: Exodeoxyribonuclease 7 small subunit (74 aa).

This sequence belongs to the XseB family. As to quaternary structure, heterooligomer composed of large and small subunits.

It is found in the cytoplasm. It catalyses the reaction Exonucleolytic cleavage in either 5'- to 3'- or 3'- to 5'-direction to yield nucleoside 5'-phosphates.. Functionally, bidirectionally degrades single-stranded DNA into large acid-insoluble oligonucleotides, which are then degraded further into small acid-soluble oligonucleotides. This Ruthia magnifica subsp. Calyptogena magnifica protein is Exodeoxyribonuclease 7 small subunit.